Reading from the N-terminus, the 315-residue chain is Putative pyruvate, phosphate dikinase regulatory protein (315 aa).

The interval 1-32 (MGPFGARASPEAGQVVKQPLTDDPQESLAQGE) is disordered. 189 to 196 (GVSRTSKT) is a binding site for ADP.

It belongs to the pyruvate, phosphate/water dikinase regulatory protein family. PDRP subfamily.

It catalyses the reaction N(tele)-phospho-L-histidyl/L-threonyl-[pyruvate, phosphate dikinase] + ADP = N(tele)-phospho-L-histidyl/O-phospho-L-threonyl-[pyruvate, phosphate dikinase] + AMP + H(+). It carries out the reaction N(tele)-phospho-L-histidyl/O-phospho-L-threonyl-[pyruvate, phosphate dikinase] + phosphate + H(+) = N(tele)-phospho-L-histidyl/L-threonyl-[pyruvate, phosphate dikinase] + diphosphate. Its function is as follows. Bifunctional serine/threonine kinase and phosphorylase involved in the regulation of the pyruvate, phosphate dikinase (PPDK) by catalyzing its phosphorylation/dephosphorylation. In Caulobacter vibrioides (strain ATCC 19089 / CIP 103742 / CB 15) (Caulobacter crescentus), this protein is Putative pyruvate, phosphate dikinase regulatory protein.